Consider the following 146-residue polypeptide: uncharacterized protein (146 aa).

Residues 7-27 (FVLSITIVLVILIIIAFIWYN) traverse the membrane as a helical segment.

Belongs to the asfivirus E146L family.

Its subcellular location is the host membrane. The protein resides in the virion. This is an uncharacterized protein from African swine fever virus (strain Badajoz 1971 Vero-adapted) (Ba71V).